The sequence spans 154 residues: Interleukin-2 (154 aa).

The first 20 residues, 1-20 (MYKMQLLCCIALTLALMANG), serve as a signal peptide directing secretion. O-linked (GalNAc...) threonine glycosylation occurs at Thr23. Cys78 and Cys126 are oxidised to a cystine.

The protein belongs to the IL-2 family.

It is found in the secreted. In terms of biological role, cytokine produced by activated CD4-positive helper T-cells and to a lesser extend activated CD8-positive T-cells and natural killer (NK) cells that plays pivotal roles in the immune response and tolerance. Binds to a receptor complex composed of either the high-affinity trimeric IL-2R (IL2RA/CD25, IL2RB/CD122 and IL2RG/CD132) or the low-affinity dimeric IL-2R (IL2RB and IL2RG). Interaction with the receptor leads to oligomerization and conformation changes in the IL-2R subunits resulting in downstream signaling starting with phosphorylation of JAK1 and JAK3. In turn, JAK1 and JAK3 phosphorylate the receptor to form a docking site leading to the phosphorylation of several substrates including STAT5. This process leads to activation of several pathways including STAT, phosphoinositide-3-kinase/PI3K and mitogen-activated protein kinase/MAPK pathways. Functions as a T-cell growth factor and can increase NK-cell cytolytic activity as well. Promotes strong proliferation of activated B-cells and subsequently immunoglobulin production. Plays a pivotal role in regulating the adaptive immune system by controlling the survival and proliferation of regulatory T-cells, which are required for the maintenance of immune tolerance. Moreover, participates in the differentiation and homeostasis of effector T-cell subsets, including Th1, Th2, Th17 as well as memory CD8-positive T-cells. The protein is Interleukin-2 (IL2) of Sus scrofa (Pig).